A 209-amino-acid polypeptide reads, in one-letter code: uncharacterized protein (209 aa).

Catalysis depends on charge relay system residues Ser-119 and His-160.

This sequence belongs to the peptidase S51 family.

This is an uncharacterized protein from Listeria innocua serovar 6a (strain ATCC BAA-680 / CLIP 11262).